The chain runs to 425 residues: Glutamyl-tRNA reductase (425 aa).

Substrate-binding positions include 49–52, serine 107, 112–114, and glutamine 118; these read TCNR and EPQ. The active-site Nucleophile is cysteine 50. 187–192 serves as a coordination point for NADP(+); that stretch reads GAGETI.

This sequence belongs to the glutamyl-tRNA reductase family. As to quaternary structure, homodimer.

The enzyme catalyses (S)-4-amino-5-oxopentanoate + tRNA(Glu) + NADP(+) = L-glutamyl-tRNA(Glu) + NADPH + H(+). It functions in the pathway porphyrin-containing compound metabolism; protoporphyrin-IX biosynthesis; 5-aminolevulinate from L-glutamyl-tRNA(Glu): step 1/2. Catalyzes the NADPH-dependent reduction of glutamyl-tRNA(Glu) to glutamate 1-semialdehyde (GSA). This is Glutamyl-tRNA reductase from Pseudomonas putida (strain GB-1).